A 975-amino-acid chain; its full sequence is Nesprin-3 (975 aa).

Over Met1–Cys925 the chain is Cytoplasmic. Residues Arg220–Gly325 form a Spectrin 1 repeat. A coiled-coil region spans residues Asn617 to Gln645. Residues Val647–Leu740 form a Spectrin 2 repeat. Residues Gly917–Thr975 enclose the KASH domain. A helical; Anchor for type IV membrane protein transmembrane segment spans residues Val926–Ile946. Residues Arg947–Thr975 lie on the Perinuclear space side of the membrane.

Belongs to the nesprin family. Core component of LINC complexes which are composed of inner nuclear membrane SUN domain-containing proteins coupled to outer nuclear membrane KASH domain-containing nesprins. SUN and KASH domain-containing proteins seem to bind each other promiscuously; however, differentially expression of LINC complex constituents can give rise to specific assemblies. Interacts with SUN1 and SUN2; probably forming respective LINC complexes. Interacts with PLEC (via actin-binding domain). Interacts with DST. Interacts with SYNE1 via spectrin repeats. Interacts (via KASH domain) with TOR1A (ATP-bound); the interaction is required for SYNE3 nuclear envelope localization. Post-translationally, the disulfid bond with SUN1 or SUN2 is required for stability of the respective LINC complex under tensile forces. Expressed in aortic endothelial cells (at protein level).

It is found in the nucleus outer membrane. It localises to the nucleus envelope. Its subcellular location is the rough endoplasmic reticulum. As a component of the LINC (LInker of Nucleoskeleton and Cytoskeleton) complex involved in the connection between the nuclear lamina and the cytoskeleton. The nucleocytoplasmic interactions established by the LINC complex play an important role in the transmission of mechanical forces across the nuclear envelope and in nuclear movement and positioning. Probable anchoring protein which tethers the nucleus to the cytoskeleton by binding PLEC which can associate with the intermediate filament system. Plays a role in the regulation of aortic epithelial cell morphology, and is required for flow-induced centrosome polarization and directional migration in aortic endothelial cells. This is Nesprin-3 from Homo sapiens (Human).